Consider the following 335-residue polypeptide: NmrA-like family domain-containing oxidoreductase ptmS (335 aa).

Residues 12–17 (GATGNQ), 39–43 (RDPNS), 60–61 (DG), 81–88 (INSDDPVF), lysine 139, and 163–166 (FLEN) each bind NADP(+). An interaction with ASS1 region spans residues 161–206 (GYFLENFLFKQGAFIMGGFPWETDAEGYLTWKVPYWGGEEQIPFLS).

This sequence belongs to the NmrA-type oxidoreductase family.

It functions in the pathway secondary metabolite biosynthesis. NmrA-like family domain-containing oxidoreductase; part of the gene cluster that mediates the biosynthesis of the indole diterpenes penitrems. The geranylgeranyl diphosphate (GGPP) synthase ptmG catalyzes the first step in penitrem biosynthesis via conversion of farnesyl pyrophosphate and isopentyl pyrophosphate into geranylgeranyl pyrophosphate (GGPP). Condensation of indole-3-glycerol phosphate with GGPP by the prenyl transferase ptmC then forms 3-geranylgeranylindole (3-GGI). Epoxidation by the FAD-dependent monooxygenase ptmM leads to a epoxidized-GGI that is substrate of the terpene cyclase ptmB for cyclization to yield paspaline. Paspaline is subsequently converted to 13-desoxypaxilline by the cytochrome P450 monooxygenase ptmP, the latter being then converted to paxilline by the cytochrome P450 monooxygenase ptmQ. Paxilline is converted to beta-paxitriol via C-10 ketoreduction by the short-chain dehydrogenase ptmH which can be monoprenylated at the C-20 by the indole diterpene prenyltransferase ptmD. A two-step elimination (acetylation and elimination) process performed by the O-acetyltransferase ptmV and ptmI leads to the production of the prenylated form of penijanthine. The FAD-linked oxidoreductase ptmO then converts the prenylated form of penijanthine into PC-M5 which is in turn transformed into PC-M4 by the aromatic dimethylallyltransferase ptmE. Five sequential oxidative transformations performed by the cytochrome P450 monooxygenases ptmK, ptmU, ptmL, ptmN and ptmJ yield the various penitrem compounds. PtmK, ptmU and ptmM are involved in the formation of the key bicyclic ring of penitrem C via the formation of the intermediates secopenitrem D and penitrem D. PtmL catalyzes the epoxidation of penitrem D and C to yield penitrem B and F, respectively. PtmJ catalyzes the last benzylic hydroxylation to convert penitrem B to prenitrem E and penitrem F to penitrem A. This chain is NmrA-like family domain-containing oxidoreductase ptmS, found in Penicillium ochrochloron.